Reading from the N-terminus, the 609-residue chain is Interleukin-1 receptor-associated kinase 3 (609 aa).

The Death domain occupies 41–106 (WRGLAERLSN…RAIHLIINYG (66 aa)). Threonine 110 is subject to Phosphothreonine. The Protein kinase domain maps to 178–463 (FHKDFLIGEG…SSLESTQPSL (286 aa)). Residues 184–192 (IGEGEIFEV), lysine 205, 308–311 (SSAN), and aspartate 324 contribute to the ATP site. Serine 480 is modified (phosphoserine).

The protein belongs to the protein kinase superfamily. TKL Ser/Thr protein kinase family. Pelle subfamily. As to quaternary structure, monomer. Homodimer. May interact with IRAK4 (when phosphorylated). Interacts (when phosphorylated at Thr-110) with PIN1 (via WW domain) in response to IL33-mediated (but not TLR4 ligand LPS) dendritic cell stimulation. Expressed in inflamed lung macrophages (at protein level). Expressed in dendritic cells (at protein level). Highly expressed in liver and thymus and at lower levels in heart, brain, spleen and kidney.

Its subcellular location is the cytoplasm. The protein resides in the nucleus. In terms of biological role, putative inactive protein kinase which regulates signaling downstream of immune receptors including IL1R and Toll-like receptors. Inhibits dissociation of IRAK1 and IRAK4 from the Toll-like receptor signaling complex by either inhibiting the phosphorylation of IRAK1 and IRAK4 or stabilizing the receptor complex. Upon IL33-induced lung inflammation, positively regulates expression of IL6, CSF3, CXCL2 and CCL5 mRNAs in dendritic cells. The chain is Interleukin-1 receptor-associated kinase 3 from Mus musculus (Mouse).